A 208-amino-acid chain; its full sequence is 3-demethoxyubiquinol 3-hydroxylase (208 aa).

The Fe cation site is built by glutamate 57, glutamate 87, histidine 90, glutamate 139, glutamate 171, and histidine 174.

The protein belongs to the COQ7 family. Requires Fe cation as cofactor.

Its subcellular location is the cell membrane. The enzyme catalyses a 5-methoxy-2-methyl-3-(all-trans-polyprenyl)benzene-1,4-diol + AH2 + O2 = a 3-demethylubiquinol + A + H2O. The protein operates within cofactor biosynthesis; ubiquinone biosynthesis. In terms of biological role, catalyzes the hydroxylation of 2-nonaprenyl-3-methyl-6-methoxy-1,4-benzoquinol during ubiquinone biosynthesis. The protein is 3-demethoxyubiquinol 3-hydroxylase of Burkholderia lata (strain ATCC 17760 / DSM 23089 / LMG 22485 / NCIMB 9086 / R18194 / 383).